Consider the following 505-residue polypeptide: Peroxisome proliferator-activated receptor gamma (505 aa).

Residues methionine 1 to serine 26 form a disordered region. Positions phenylalanine 17 to serine 26 are enriched in polar residues. Serine 112 is modified (phosphoserine; by MAPK). The nuclear receptor DNA-binding region spans alanine 136–phenylalanine 210. NR C4-type zinc fingers lie at residues cysteine 139–cysteine 159 and cysteine 176–cysteine 198. Residues histidine 205–methionine 280 are interaction with FAM120B. Residues aspartate 238–aspartate 503 enclose the NR LBD domain. Lysine 252 participates in a covalent cross-link: Glycyl lysine isopeptide (Lys-Gly) (interchain with G-Cter in ubiquitin). The 9aaTAD signature appears at proline 495–aspartate 503.

It belongs to the nuclear hormone receptor family. NR1 subfamily. Interacts with FOXO1 (acetylated form). Heterodimer with other nuclear receptors, such as RXRA. The heterodimer with the retinoic acid receptor RXRA is called adipocyte-specific transcription factor ARF6. Interacts with NCOA6 coactivator, leading to a strong increase in transcription of target genes. Interacts with coactivator PPARBP, leading to a mild increase in transcription of target genes. Interacts with NOCA7 in a ligand-inducible manner. Interacts with NCOA1 and NCOA2 LXXLL motifs. Interacts with ASXL1, ASXL2, DNTTIP2, FAM120B, MAP2K1/MEK1, NR0B2, PDPK1, PRDM16, PRMT2 and TGFB1I1. Interacts (when activated by agonist) with PPP5C. Interacts with HELZ2 and THRAP3; the interaction stimulates the transcriptional activity of PPARG. Interacts with PER2, the interaction is ligand dependent and blocks PPARG recruitment to target promoters. Interacts with NOCT. Interacts with ACTN4. Interacts (when in the liganded conformation) with GPS2. Interacts with CRY1 and CRY2 in a ligand-dependent manner. In the absence of hormonal ligand, interacts with TACC1. In macrophages, interacts with PAQR3 and STUB1; the interactions promote PPARG poylubiquitination and STUB1-mediated degradation. Phosphorylated at basal conditions and dephosphorylated when treated with the ligand. May be dephosphorylated by PPP5C. The phosphorylated form may be inactive and dephosphorylation induces adipogenic activity. Post-translationally, ubiquitinated by E3 ubiquitin-protein ligase complex containing FBXO9; leading to proteasomal degradation. Ubiquitinated at Lys-252 by TRIM55 leading to proteasomal degradation. Ubiquitinated by E3 ubiquitin-protein ligase STUB1/CHIP; leading to proteasomal degradation.

The protein localises to the nucleus. Its subcellular location is the cytoplasm. Its activity is regulated as follows. PDPK1 activates its transcriptional activity independently of its kinase activity. Its function is as follows. Nuclear receptor that binds peroxisome proliferators such as hypolipidemic drugs and fatty acids. Once activated by a ligand, the nuclear receptor binds to DNA specific PPAR response elements (PPRE) and modulates the transcription of its target genes, such as acyl-CoA oxidase. It therefore controls the peroxisomal beta-oxidation pathway of fatty acids. Key regulator of adipocyte differentiation and glucose homeostasis. ARF6 acts as a key regulator of the tissue-specific adipocyte P2 (aP2) enhancer. Acts as a critical regulator of gut homeostasis by suppressing NF-kappa-B-mediated pro-inflammatory responses. Plays a role in the regulation of cardiovascular circadian rhythms by regulating the transcription of BMAL1 in the blood vessels. This is Peroxisome proliferator-activated receptor gamma (PPARG) from Canis lupus familiaris (Dog).